Here is a 202-residue protein sequence, read N- to C-terminus: Orotate phosphoribosyltransferase (202 aa).

5-phospho-alpha-D-ribose 1-diphosphate contacts are provided by residues K93 and 113-121 (EDIITTGGS). Positions 117 and 145 each coordinate orotate.

It belongs to the purine/pyrimidine phosphoribosyltransferase family. PyrE subfamily. As to quaternary structure, homodimer. It depends on Mg(2+) as a cofactor.

The enzyme catalyses orotidine 5'-phosphate + diphosphate = orotate + 5-phospho-alpha-D-ribose 1-diphosphate. It functions in the pathway pyrimidine metabolism; UMP biosynthesis via de novo pathway; UMP from orotate: step 1/2. Catalyzes the transfer of a ribosyl phosphate group from 5-phosphoribose 1-diphosphate to orotate, leading to the formation of orotidine monophosphate (OMP). In Campylobacter jejuni subsp. doylei (strain ATCC BAA-1458 / RM4099 / 269.97), this protein is Orotate phosphoribosyltransferase.